The chain runs to 317 residues: tRNA dimethylallyltransferase (317 aa).

G14 to T21 contributes to the ATP binding site. Substrate is bound at residue T16–T21. The interaction with substrate tRNA stretch occupies residues D39 to Q42.

This sequence belongs to the IPP transferase family. As to quaternary structure, monomer. It depends on Mg(2+) as a cofactor.

The catalysed reaction is adenosine(37) in tRNA + dimethylallyl diphosphate = N(6)-dimethylallyladenosine(37) in tRNA + diphosphate. Functionally, catalyzes the transfer of a dimethylallyl group onto the adenine at position 37 in tRNAs that read codons beginning with uridine, leading to the formation of N6-(dimethylallyl)adenosine (i(6)A). The protein is tRNA dimethylallyltransferase of Bacillus cereus (strain ATCC 10987 / NRS 248).